A 204-amino-acid polypeptide reads, in one-letter code: Proteasome subunit beta type-3 (204 aa).

Belongs to the peptidase T1B family. As to quaternary structure, the 26S proteasome consists of a 20S proteasome core and two 19S regulatory subunits. The 20S proteasome core is composed of 28 subunits that are arranged in four stacked rings, resulting in a barrel-shaped structure. The two end rings are each formed by seven alpha subunits, and the two central rings are each formed by seven beta subunits. The catalytic chamber with the active sites is on the inside of the barrel.

The protein resides in the cytoplasm. It is found in the nucleus. Its function is as follows. Non-catalytic component of the proteasome, a multicatalytic proteinase complex which is characterized by its ability to cleave peptides with Arg, Phe, Tyr, Leu, and Glu adjacent to the leaving group at neutral or slightly basic pH. The proteasome has an ATP-dependent proteolytic activity. This Oryza sativa subsp. japonica (Rice) protein is Proteasome subunit beta type-3 (PBC1).